The sequence spans 386 residues: ATP phosphoribosyltransferase regulatory subunit (386 aa).

Belongs to the class-II aminoacyl-tRNA synthetase family. HisZ subfamily. In terms of assembly, heteromultimer composed of HisG and HisZ subunits.

The protein resides in the cytoplasm. Its pathway is amino-acid biosynthesis; L-histidine biosynthesis; L-histidine from 5-phospho-alpha-D-ribose 1-diphosphate: step 1/9. Required for the first step of histidine biosynthesis. May allow the feedback regulation of ATP phosphoribosyltransferase activity by histidine. In Ralstonia nicotianae (strain ATCC BAA-1114 / GMI1000) (Ralstonia solanacearum), this protein is ATP phosphoribosyltransferase regulatory subunit.